The following is a 616-amino-acid chain: ATP-dependent RNA helicase VAD1 (616 aa).

The interval 1–35 (MASSSTLANDDWKQGLAAPPKDLRPQTEDVTATQG) is disordered. The Q motif signature appears at 36 to 64 (SRFEDFGLRRELLMGIYTAGFERPSPIQE). A Helicase ATP-binding domain is found at 67-238 (IPMALTGRDI…DQHMVQPYEI (172 aa)). 80–87 (AKNGTGKT) lines the ATP pocket. Positions 186–189 (DEAD) match the DEAD box motif. Residues 248–408 (GVTQYYAYVE…PIPAVIDPVL (161 aa)) enclose the Helicase C-terminal domain. Residues 416 to 616 (EEERESPPPK…GASQSQQAQA (201 aa)) are disordered. 3 stretches are compositionally biased toward low complexity: residues 427–441 (AAIAAPPAQQQPQQR), 458–500 (PAAA…NSSP), and 508–523 (YPQQAPTQAQGPAQMQ). Polar residues predominate over residues 529-545 (PATQPQASAQIPVQGQT). Composition is skewed to low complexity over residues 550–579 (PRAQQQGQQQPSQPGQAEGQSQPNRRPNTG) and 606–616 (AGASQSQQAQA).

The protein belongs to the DEAD box helicase family. DDX6/DHH1 subfamily.

The protein localises to the cytoplasm. The protein resides in the P-body. It catalyses the reaction ATP + H2O = ADP + phosphate + H(+). Its function is as follows. ATP-dependent RNA helicase involved in mRNA turnover, and more specifically in mRNA decapping. Is involved in G1/S DNA-damage checkpoint recovery, probably through the regulation of the translational status of a subset of mRNAs. May also have a role in translation and mRNA nuclear export. Blocks autophagy in nutrient-rich conditions by, at least partly, binding and repressing the expression of a set of ATG genes, including ATG3, ATG7, ATG8, ATG19, ATG20 and ATG22. VAD1-mediated repression of autophagy is regulated by TOR-dependent phosphorylation of the decapping enzyme DCP2. Regulates multiple virulence-associated genes. Repression of autophagy by VAD1 also regulates the pathogenesis. In Cryptococcus neoformans var. grubii serotype A (strain H99 / ATCC 208821 / CBS 10515 / FGSC 9487) (Filobasidiella neoformans var. grubii), this protein is ATP-dependent RNA helicase VAD1.